The sequence spans 503 residues: MRISPGEITKVLEDRIKEFKEEIDLQETGRVVQIGDGIARVYGLNSVMADELVEFVETGVKGLAFNLEEDNVGVILLGPYSQIKEGHIVKRLKKIIEVPVGEELLGRVVNPLGEPLDGLGPVEAKHTRKIEIKAPGVIYRRPVNTPLQTGIKAIDAMIPIGRGQRELIIGDRQTGKTAIAIDTIINQKGKGVYCIYVAIGQKTAAVARIVDKLREFGAMEYTTVVVASASDPAPIQYIAPYAGCAMGEYFMYNSKDALVVYDDLSKHAAAYRQLSLLLRRPPGREAYPGDIFYLHSRLLERAARLDDKMGGGSLTALPIVETQANDVSAYIPTNVISITDGQIYLEPGLFYSGFRPAINVGLSVSRVGGSAQIRAMKQVAGMLRIDLAQFRELETFAQFASELDPATRAQIVRGQHLQELLKQDQYSPLPVEEQVVVLYAGVRGYLDELPVESVRKFEKEFLDYMRTSKSSLLKLISEKKELTQEVEDELKKSIQEFLEGWHE.

170-177 (GDRQTGKT) contributes to the ATP binding site.

This sequence belongs to the ATPase alpha/beta chains family. F-type ATPases have 2 components, CF(1) - the catalytic core - and CF(0) - the membrane proton channel. CF(1) has five subunits: alpha(3), beta(3), gamma(1), delta(1), epsilon(1). CF(0) has three main subunits: a(1), b(2) and c(9-12). The alpha and beta chains form an alternating ring which encloses part of the gamma chain. CF(1) is attached to CF(0) by a central stalk formed by the gamma and epsilon chains, while a peripheral stalk is formed by the delta and b chains.

It is found in the cell inner membrane. The enzyme catalyses ATP + H2O + 4 H(+)(in) = ADP + phosphate + 5 H(+)(out). In terms of biological role, produces ATP from ADP in the presence of a proton gradient across the membrane. The alpha chain is a regulatory subunit. This is ATP synthase subunit alpha from Pseudothermotoga lettingae (strain ATCC BAA-301 / DSM 14385 / NBRC 107922 / TMO) (Thermotoga lettingae).